The sequence spans 425 residues: Probable proline--tRNA ligase, mitochondrial (425 aa).

Belongs to the class-II aminoacyl-tRNA synthetase family.

Its subcellular location is the mitochondrion. It carries out the reaction tRNA(Pro) + L-proline + ATP = L-prolyl-tRNA(Pro) + AMP + diphosphate. The sequence is that of Probable proline--tRNA ligase, mitochondrial from Schizosaccharomyces pombe (strain 972 / ATCC 24843) (Fission yeast).